The chain runs to 324 residues: MKPSIILYKTLPDDLLHRLEAHFTVTQVPNLHPETVARHAQAFASAQGLLGASETVNRALLEKMPALRAASTISVGYDNVEVDALTARKIVLMHTPAVLTETVADTVMALMLATARRVVDVAERVKAGEWTESIGPAWFGVDVHHKTLGIVGMGRIGMALAQRAHFGFTMPVLYHARRRHQEAEDRFNARYCDLDTLLQEADFVCVILPLTAETRHLFGATQFARMKSSAIFINAGRGPVVDENALIAALQNGEIYAAGLDVFEQEPLSVDSPLLNMSNVVAVPHIGSATHETRYNMMACAVDNLIDALQGKIEKNCVNPQAAG.

Residues arginine 237 and glutamate 266 contribute to the active site. The active-site Proton donor is the histidine 285.

It belongs to the D-isomer specific 2-hydroxyacid dehydrogenase family. GhrB subfamily. In terms of assembly, homodimer.

It is found in the cytoplasm. It carries out the reaction glycolate + NADP(+) = glyoxylate + NADPH + H(+). It catalyses the reaction (R)-glycerate + NAD(+) = 3-hydroxypyruvate + NADH + H(+). The enzyme catalyses (R)-glycerate + NADP(+) = 3-hydroxypyruvate + NADPH + H(+). Catalyzes the NADPH-dependent reduction of glyoxylate and hydroxypyruvate into glycolate and glycerate, respectively. The chain is Glyoxylate/hydroxypyruvate reductase B from Salmonella dublin (strain CT_02021853).